A 318-amino-acid polypeptide reads, in one-letter code: Transaldolase (318 aa).

The active-site Schiff-base intermediate with substrate is the lysine 132.

Belongs to the transaldolase family. Type 1 subfamily. Homodimer.

It is found in the cytoplasm. It catalyses the reaction D-sedoheptulose 7-phosphate + D-glyceraldehyde 3-phosphate = D-erythrose 4-phosphate + beta-D-fructose 6-phosphate. It participates in carbohydrate degradation; pentose phosphate pathway; D-glyceraldehyde 3-phosphate and beta-D-fructose 6-phosphate from D-ribose 5-phosphate and D-xylulose 5-phosphate (non-oxidative stage): step 2/3. Transaldolase is important for the balance of metabolites in the pentose-phosphate pathway. This chain is Transaldolase, found in Shewanella baltica (strain OS155 / ATCC BAA-1091).